A 413-amino-acid chain; its full sequence is Tyrosine--tRNA ligase 2 (413 aa).

The short motif at 58-67 is the 'HIGH' region element; the sequence is PSAPDVHLGH. 2 repeat units span residues 89-94 and 96-101. A 2 X 6 AA tandem repeats region spans residues 89–101; sequence GDFTGKIGDPTGK. Residues 242–246 carry the 'KMSKS' region motif; sequence KMSKS. Residue lysine 245 participates in ATP binding. One can recognise an S4 RNA-binding domain in the interval 353–413; the sequence is IAMIDLLVKL…VGKRKFLKLQ (61 aa).

This sequence belongs to the class-I aminoacyl-tRNA synthetase family. TyrS type 2 subfamily. Homodimer.

Its subcellular location is the cytoplasm. The catalysed reaction is tRNA(Tyr) + L-tyrosine + ATP = L-tyrosyl-tRNA(Tyr) + AMP + diphosphate + H(+). Its function is as follows. Catalyzes the attachment of tyrosine to tRNA(Tyr) in a two-step reaction: tyrosine is first activated by ATP to form Tyr-AMP and then transferred to the acceptor end of tRNA(Tyr). The polypeptide is Tyrosine--tRNA ligase 2 (Bacillus subtilis (strain 168)).